The primary structure comprises 226 residues: Charged multivesicular body protein 4 (226 aa).

The stretch at 22 to 88 forms a coiled coil; that stretch reads IQKLRETENM…DGTLSTIEMQ (67 aa). The segment at 169–226 is disordered; sequence QENFDKEIIGIPEPTPTLPEAPTEDLPEKAKEKKKATTTTAVEDDDDPDMKQLLSWSN.

The protein belongs to the SNF7 family. Homopolymer; forms elongated striated filaments of uniform ~10nm width. Monomers interact in a staggered arrangement mediated by complementary charged electrostatic surfaces. Interacts with l(2)gd1 (via DM14 domains 1 and 3); the interaction is direct and blocks access to the surface involved in homopolymerization. This interaction may be required for the ESCRT-III complex role in multivesicular body formation. In terms of tissue distribution, expressed at considerably higher levels in testis than in ovary. Expressed in midgut, eye, mouthparts and male accessory gland.

The protein resides in the endosome. The protein localises to the multivesicular body. Its subcellular location is the midbody. Its activity is regulated as follows. May be regulated by aurB/Aurora kinase B-dependent phosphorylation. In terms of biological role, probable core polymerisation component of the endosomal sorting required for transport (ESCRT) III complex involved in multiple cellular processes requiring the outward bending of membranes, including vesicle budding, membrane repair and cytokinesis. The ESCRT pathway involves 4 complexes (ESCRT-0, -I, -II and -III) that sequentially assemble on the cytoplasmic side of membranes and induce membrane remodeling, budding and scission. As part of the ESCRT-III complex, involved in the budding of intraluminal vesicles (ILVs) into endosomes to form multivesicular bodies (MVBs), which target their contents for degradation via the endolysosomal pathway. Involved in regulation of signal transduction pathways, including the Notch and BMP/decapentaplegic (dpp) pathways, by sequestering the intracellular domains of activated receptors into ILVs, isolating them from the cytoplasm and targeting them for lysosomal degradation. Involved in targeting ubiquitilated proteins, such as mono-ubiquitilanated N/Notch, to MVBs for degradation. Plays a role in wing development by regulating Notch signaling. Involved in abscission of germline cells during oogenesis. Involved in spermiogenesis. Required for efficient cytoplasmic isolation and abscission during cytokinesis of epithelial sensory organ precursor cells. May be involved in septate junction remodeling and maintenance. In Drosophila melanogaster (Fruit fly), this protein is Charged multivesicular body protein 4.